The chain runs to 211 residues: tRNA (guanine-N(7)-)-methyltransferase (211 aa).

D40, E65, N92, and D118 together coordinate S-adenosyl-L-methionine. D118 is an active-site residue. Positions 122 and 154 each coordinate substrate.

Belongs to the class I-like SAM-binding methyltransferase superfamily. TrmB family.

The catalysed reaction is guanosine(46) in tRNA + S-adenosyl-L-methionine = N(7)-methylguanosine(46) in tRNA + S-adenosyl-L-homocysteine. Its pathway is tRNA modification; N(7)-methylguanine-tRNA biosynthesis. Catalyzes the formation of N(7)-methylguanine at position 46 (m7G46) in tRNA. The sequence is that of tRNA (guanine-N(7)-)-methyltransferase from Microcystis aeruginosa (strain NIES-843 / IAM M-2473).